The sequence spans 516 residues: Protein phosphatase 1H (516 aa).

2 disordered regions span residues 102 to 122 and 181 to 202; these read ADPS…PSGD and PPTC…SGSQ. The PPM-type phosphatase domain occupies 106–506; that stretch reads SVSYTPSRRR…DDISVFIIPL (401 aa). Residues 190-202 are compositionally biased toward polar residues; it reads PNPQLHASASGSQ.

This sequence belongs to the PP2C family.

The protein resides in the nucleus. It is found in the cytoplasm. The catalysed reaction is O-phospho-L-seryl-[protein] + H2O = L-seryl-[protein] + phosphate. The enzyme catalyses O-phospho-L-threonyl-[protein] + H2O = L-threonyl-[protein] + phosphate. In Danio rerio (Zebrafish), this protein is Protein phosphatase 1H (ppm1h).